A 447-amino-acid chain; its full sequence is MTMTPREIVAELDKFIIGQNDAKRAVAIALRNRWRRMQLGEELRREIFPKNILMIGPTGVGKTEIARRLSDLAGAPFLKIEATKFTEVGYVGRDVESIIRDLVDVAVKMTREKAIRQVKSLAEEAAEERVLDALIPPARGGFQGEPTAEEKPTEKKESATRQLFRKKLRNGELDDKEIEVEVSAHPSFEIMGPPGMEEMVSQLQGIMSSMSSRRSKSRRLKVKDALRILGEEEAAKLVDEDQIKSTALASVEQNGIVFIDEIDKIVKREGAVGADVSREGVQRDLLPLVEGSTVFTKYGMVKTDHILFIASGAFHIAKPSDLVPELQGRFPIRVELKALTADDFVRILTEPKASLTEQYTELLKTENFGLSFTKDGIKRLAEIAYQVNDRSENIGARRLHTIMERLLEEVSFEATDKQGESITIDADYVNKQLKKLAEDEDLSRYIL.

Residues isoleucine 17 and 59-64 (GVGKTE) each bind ATP. The segment at 136 to 160 (PPARGGFQGEPTAEEKPTEKKESAT) is disordered. A compositionally biased stretch (basic and acidic residues) spans 148–159 (AEEKPTEKKESA). Residues aspartate 260, glutamate 325, and arginine 397 each coordinate ATP.

This sequence belongs to the ClpX chaperone family. HslU subfamily. In terms of assembly, a double ring-shaped homohexamer of HslV is capped on each side by a ring-shaped HslU homohexamer. The assembly of the HslU/HslV complex is dependent on binding of ATP.

Its subcellular location is the cytoplasm. Functionally, ATPase subunit of a proteasome-like degradation complex; this subunit has chaperone activity. The binding of ATP and its subsequent hydrolysis by HslU are essential for unfolding of protein substrates subsequently hydrolyzed by HslV. HslU recognizes the N-terminal part of its protein substrates and unfolds these before they are guided to HslV for hydrolysis. In Coxiella burnetii (strain RSA 331 / Henzerling II), this protein is ATP-dependent protease ATPase subunit HslU.